The primary structure comprises 334 residues: Endoplasmic reticulum junction formation protein lunapark (334 aa).

The Cytoplasmic segment spans residues 1 to 40 (MGWFFQKKKEFDFGGELDRLEMKLEEAQYNIDNIQSQKKK). Positions 12–42 (DFGGELDRLEMKLEEAQYNIDNIQSQKKKIL) form a coiled coil. Residues 41-61 (ILFRYTVCSLAIYTIGMAVWA) traverse the membrane as a helical segment. The Lumenal portion of the chain corresponds to 62 to 78 (SRSSILFQHPLFSKLFR). The chain crosses the membrane as a helical span at residues 79 to 99 (ISLYILGVFSLYMFRWAIAWF). The stretch at 99–127 (FCEKRLSRARMNLHKLNAEKRKILDALKS) forms a coiled coil. Residues 100–334 (CEKRLSRARM…SVPESLTPTK (235 aa)) lie on the Cytoplasmic side of the membrane. A C4-type; plays a role in ER morphology zinc finger spans residues 201 to 227 (CSHCFHHNGLASYGEKASDVRYVCLFC). A disordered region spans residues 237–315 (KSLPSSEMDS…SSPDASYNSV (79 aa)). Residues 239 to 252 (LPSSEMDSNLQTNP) show a composition bias toward polar residues. Over residues 253-270 (SSISKGKKNNSNNTTQKG) the composition is skewed to low complexity. Positions 273–283 (IISSPQVINAS) are enriched in polar residues. Serine 284 is subject to Phosphoserine. Over residues 297 to 315 (ALPTSPLSSSSPDASYNSV) the composition is skewed to low complexity.

This sequence belongs to the lunapark family.

It is found in the endoplasmic reticulum membrane. The protein localises to the golgi apparatus membrane. Its function is as follows. Plays a role in tubular endoplasmic reticulum network formation and maintenance. This is Endoplasmic reticulum junction formation protein lunapark (lnp1) from Schizosaccharomyces pombe (strain 972 / ATCC 24843) (Fission yeast).